Reading from the N-terminus, the 177-residue chain is Large ribosomal subunit protein uL6 (177 aa).

Belongs to the universal ribosomal protein uL6 family. In terms of assembly, part of the 50S ribosomal subunit.

Its function is as follows. This protein binds to the 23S rRNA, and is important in its secondary structure. It is located near the subunit interface in the base of the L7/L12 stalk, and near the tRNA binding site of the peptidyltransferase center. In Methylobacterium sp. (strain 4-46), this protein is Large ribosomal subunit protein uL6.